The chain runs to 329 residues: Sulfate/thiosulfate import ATP-binding protein CysA (329 aa).

An ABC transporter domain is found at 3 to 237; the sequence is IEVRNVSKRF…PANDFVYHFL (235 aa). An ATP-binding site is contributed by 35–42; sequence GPSGCGKT.

Belongs to the ABC transporter superfamily. Sulfate/tungstate importer (TC 3.A.1.6) family. As to quaternary structure, the complex is composed of two ATP-binding proteins (CysA), two transmembrane proteins (CysT and CysW) and a solute-binding protein (CysP).

It localises to the cell inner membrane. The enzyme catalyses sulfate(out) + ATP + H2O = sulfate(in) + ADP + phosphate + H(+). It catalyses the reaction thiosulfate(out) + ATP + H2O = thiosulfate(in) + ADP + phosphate + H(+). Functionally, part of the ABC transporter complex CysAWTP involved in sulfate/thiosulfate import. Responsible for energy coupling to the transport system. In Pseudomonas putida (strain ATCC 47054 / DSM 6125 / CFBP 8728 / NCIMB 11950 / KT2440), this protein is Sulfate/thiosulfate import ATP-binding protein CysA.